The primary structure comprises 267 residues: Probable membrane transporter protein MJ0441 (267 aa).

7 consecutive transmembrane segments (helical) span residues 10 to 30 (LLLLPLLIIVGFIVGILGSLF), 31 to 51 (GIGGGFLVAPILTFIFDYFGI), 55 to 75 (VKFAVGTSLFVVFINSIISIF), 87 to 107 (ASITIGIISLVFSYFSGFLVV), 158 to 178 (FLSGLFGIGGGIVIIPILAMA), 185 to 205 (AVAISVGVIPLTSIGGLISYL), and 213 to 233 (IYNIGYVSIPIALIMAIPIIY).

It belongs to the 4-toluene sulfonate uptake permease (TSUP) (TC 2.A.102) family.

Its subcellular location is the cell membrane. In Methanocaldococcus jannaschii (strain ATCC 43067 / DSM 2661 / JAL-1 / JCM 10045 / NBRC 100440) (Methanococcus jannaschii), this protein is Probable membrane transporter protein MJ0441.